A 461-amino-acid chain; its full sequence is ATP-dependent protease ATPase subunit HslU (461 aa).

Residues isoleucine 18, 60–65, aspartate 274, glutamate 339, and arginine 411 each bind ATP; that span reads GVGKTE.

Belongs to the ClpX chaperone family. HslU subfamily. In terms of assembly, a double ring-shaped homohexamer of HslV is capped on each side by a ring-shaped HslU homohexamer. The assembly of the HslU/HslV complex is dependent on binding of ATP.

Its subcellular location is the cytoplasm. Functionally, ATPase subunit of a proteasome-like degradation complex; this subunit has chaperone activity. The binding of ATP and its subsequent hydrolysis by HslU are essential for unfolding of protein substrates subsequently hydrolyzed by HslV. HslU recognizes the N-terminal part of its protein substrates and unfolds these before they are guided to HslV for hydrolysis. The protein is ATP-dependent protease ATPase subunit HslU of Carboxydothermus hydrogenoformans (strain ATCC BAA-161 / DSM 6008 / Z-2901).